Reading from the N-terminus, the 593-residue chain is Aspartate--tRNA ligase (593 aa).

Glu173 provides a ligand contact to L-aspartate. Positions 197 to 200 are aspartate; sequence QLFK. Position 219 (Arg219) interacts with L-aspartate. Residues 219–221 and Gln228 each bind ATP; that span reads RDE. His449 is an L-aspartate binding site. Glu483 is an ATP binding site. Position 490 (Arg490) interacts with L-aspartate. Residue 535–538 coordinates ATP; it reads GLDR.

The protein belongs to the class-II aminoacyl-tRNA synthetase family. Type 1 subfamily. As to quaternary structure, homodimer.

It is found in the cytoplasm. It carries out the reaction tRNA(Asp) + L-aspartate + ATP = L-aspartyl-tRNA(Asp) + AMP + diphosphate. In terms of biological role, catalyzes the attachment of L-aspartate to tRNA(Asp) in a two-step reaction: L-aspartate is first activated by ATP to form Asp-AMP and then transferred to the acceptor end of tRNA(Asp). This is Aspartate--tRNA ligase from Shewanella piezotolerans (strain WP3 / JCM 13877).